Consider the following 232-residue polypeptide: RNA chaperone ProQ (232 aa).

Residues 105-182 (EAKARVQAQR…REEQHTPVSD (78 aa)) are disordered. Basic and acidic residues predominate over residues 117 to 136 (QQAKKREAAAAAGEKEDAPR). The span at 137 to 146 (RERKPRPTTP) shows a compositional bias: basic residues. The span at 147–177 (RRKEGAERKPRAQKPVEKAPKTVKAPREEQH) shows a compositional bias: basic and acidic residues.

This sequence belongs to the ProQ family.

Its subcellular location is the cytoplasm. Functionally, RNA chaperone with significant RNA binding, RNA strand exchange and RNA duplexing activities. May regulate ProP activity through an RNA-based, post-transcriptional mechanism. The chain is RNA chaperone ProQ from Shigella flexneri serotype 5b (strain 8401).